Here is a 150-residue protein sequence, read N- to C-terminus: Small ribosomal subunit protein eS19 (150 aa).

Belongs to the eukaryotic ribosomal protein eS19 family. In terms of assembly, part of the 30S ribosomal subunit.

Its function is as follows. May be involved in maturation of the 30S ribosomal subunit. The chain is Small ribosomal subunit protein eS19 from Thermoplasma acidophilum (strain ATCC 25905 / DSM 1728 / JCM 9062 / NBRC 15155 / AMRC-C165).